We begin with the raw amino-acid sequence, 773 residues long: ATP-dependent zinc metalloprotease YME1L1 (773 aa).

Over 1–295 (MFSLSSTVQP…TNDSLRRTRL (295 aa)) the chain is Mitochondrial matrix. Residues 296–316 (ILFVLLLFGIYGLLKNPFLSV) form a helical membrane-spanning segment. Residues 317 to 773 (RFRTTTGLDS…VLEGKKLEVR (457 aa)) lie on the Mitochondrial intermembrane side of the membrane. Residues Val-341, Thr-383, Gly-384, Lys-385, Thr-386, and Leu-387 each contribute to the ATP site. Zn(2+) is bound at residue His-599. Glu-600 is a catalytic residue. Zn(2+)-binding residues include His-603 and Asp-677.

The protein in the N-terminal section; belongs to the AAA ATPase family. It in the C-terminal section; belongs to the peptidase M41 family. In terms of assembly, homohexamer; may also form heterohexamers. Exists in several complexes of 600-1100 kDa. Interacts with AFG1L. Zn(2+) serves as cofactor. Post-translationally, proteolytically processed by mitochondrial processing peptidase (MPP) to generate the mature form. Degraded in an OMA1-dependent manner in response to oxidative stress. As to expression, high expression in cardiac and skeletal muscle mitochondria.

The protein localises to the mitochondrion inner membrane. It is found in the mitochondrion. It catalyses the reaction ATP + H2O = ADP + phosphate + H(+). ATP-dependent metalloprotease that catalyzes the degradation of folded and unfolded proteins with a suitable degron sequence in the mitochondrial intermembrane region. Plays an important role in regulating mitochondrial morphology and function by cleaving OPA1 at position S2, giving rise to a form of OPA1 that promotes maintenance of normal mitochondrial structure and mitochondrial protein metabolism. Ensures cell proliferation, maintains normal cristae morphology and complex I respiration activity, promotes antiapoptotic activity and protects mitochondria from the accumulation of oxidatively damaged membrane proteins. Required to control the accumulation of nonassembled respiratory chain subunits (NDUFB6, OX4 and ND1). Involved in the mitochondrial adaptation in response to various signals, such as stress or developmental cues, by mediating degradation of mitochondrial proteins to rewire the mitochondrial proteome. Catalyzes degradation of mitochondrial proteins, such as translocases, lipid transfer proteins and metabolic enzymes in response to nutrient starvation in order to limit mitochondrial biogenesis: mechanistically, YME1L is activated by decreased phosphatidylethanolamine levels caused by LPIN1 activity in response to mTORC1 inhibition. Acts as a regulator of adult neural stem cell self-renewal by promoting mitochondrial proteome rewiring, preserving neural stem and progenitor cells self-renewal. Required for normal, constitutive degradation of PRELID1. Catalyzes the degradation of OMA1 in response to membrane depolarization. Mediates degradation of TIMM17A downstream of the integrated stress response (ISR). Catalyzes degradation of MICU1 when MICU1 is not assembled via an interchain disulfide. The chain is ATP-dependent zinc metalloprotease YME1L1 (YME1L1) from Homo sapiens (Human).